The primary structure comprises 156 residues: 6,7-dimethyl-8-ribityllumazine synthase (156 aa).

5-amino-6-(D-ribitylamino)uracil is bound by residues F22, 57 to 59 (AYE), and 81 to 83 (TVI). 86–87 (GT) contributes to the (2S)-2-hydroxy-3-oxobutyl phosphate binding site. Catalysis depends on H89, which acts as the Proton donor. F114 contributes to the 5-amino-6-(D-ribitylamino)uracil binding site. Position 128 (R128) interacts with (2S)-2-hydroxy-3-oxobutyl phosphate.

It belongs to the DMRL synthase family. As to quaternary structure, forms an icosahedral capsid composed of 60 subunits, arranged as a dodecamer of pentamers.

The catalysed reaction is (2S)-2-hydroxy-3-oxobutyl phosphate + 5-amino-6-(D-ribitylamino)uracil = 6,7-dimethyl-8-(1-D-ribityl)lumazine + phosphate + 2 H2O + H(+). The protein operates within cofactor biosynthesis; riboflavin biosynthesis; riboflavin from 2-hydroxy-3-oxobutyl phosphate and 5-amino-6-(D-ribitylamino)uracil: step 1/2. In terms of biological role, catalyzes the formation of 6,7-dimethyl-8-ribityllumazine by condensation of 5-amino-6-(D-ribitylamino)uracil with 3,4-dihydroxy-2-butanone 4-phosphate. This is the penultimate step in the biosynthesis of riboflavin. This is 6,7-dimethyl-8-ribityllumazine synthase from Salmonella agona (strain SL483).